We begin with the raw amino-acid sequence, 689 residues long: Pentatricopeptide repeat-containing protein At1g71460, chloroplastic (689 aa).

The transit peptide at 1 to 49 (MEVVSSLGIRDLPASLSVTTSLNHRPHRSDKDGAPAKSPIRPSRTRRPS) directs the protein to the chloroplast. Residues 16-68 (LSVTTSLNHRPHRSDKDGAPAKSPIRPSRTRRPSTSPAKKPKPFRERDAFPSS) form a disordered region. Over residues 38–52 (SPIRPSRTRRPSTSP) the composition is skewed to low complexity. 18 PPR repeats span residues 75 to 109 (NPYI…GIPV), 110 to 144 (NATT…GLES), 145 to 175 (NEFL…STSS), 176 to 212 (NVYS…GVDL), 213 to 247 (NVYS…GLFN), 248 to 282 (SVFL…DIVV), 283 to 309 (WGAM…MISE), 315 to 350 (NSVI…NYVE), 351 to 381 (QPFV…SKQR), 382 to 416 (NAIS…GFRP), 417 to 451 (DVVT…LFLP), 452 to 482 (NVSL…LEQR), 483 to 517 (NVKA…KHRP), 518 to 552 (DSVT…EFES), 553 to 583 (IPFV…VAVK), 584 to 618 (GSLT…GFTP), 619 to 649 (NTFT…MLRM), and 655 to 689 (SEEH…SLQT).

The protein belongs to the PPR family. PCMP-A subfamily.

It is found in the plastid. Its subcellular location is the chloroplast. This chain is Pentatricopeptide repeat-containing protein At1g71460, chloroplastic (PCMP-A3), found in Arabidopsis thaliana (Mouse-ear cress).